The primary structure comprises 238 residues: MRTRRVYLPLKGELSMDWHDYLGPLGRGAWVTIQFTLYSMFFGAVCSFAFGIGKLSKNPFVKGFSILYIEIFRGTSLLVQLFWLFFALPIAGDMMGIDLRLSPVVAGVLALSLNLGAYGAEIVRGAIQAVSPSQYEAATALNFSSSQALWRVALPQAIPEMMPSFSNLAIAALKDTSLVSLITLHDLTFAAEQLRNFYQDSTTVYTMVLLMYFGIALVLSFFMRLIESSVTRWRGHRR.

Residues 29-223 (AWVTIQFTLY…GIALVLSFFM (195 aa)) enclose the ABC transmembrane type-1 domain. The next 5 membrane-spanning stretches (helical) occupy residues 33–53 (IQFT…FGIG), 77–97 (LLVQ…MMGI), 103–123 (PVVA…AEIV), 152–172 (VALP…AIAA), and 203–223 (TVYT…SFFM).

The protein belongs to the binding-protein-dependent transport system permease family. HisMQ subfamily.

It is found in the cell inner membrane. Functionally, probably part of the binding-protein-dependent transport system y4tEFGH for an amino acid. Probably responsible for the translocation of the substrate across the membrane. This Sinorhizobium fredii (strain NBRC 101917 / NGR234) protein is Probable amino-acid ABC transporter permease protein y4tF.